Reading from the N-terminus, the 367-residue chain is 3-ketodihydrosphingosine reductase ksrA (367 aa).

A helical membrane pass occupies residues 12-32 (ASPATLGISLILCGFIVYSVS). Positions 53, 55, 57, 78, 82, 108, and 109 each coordinate NADPH. The short motif at 53–57 (GGSDG) is the GXSXG element. The helical transmembrane segment at 193–213 (LIFTCSTLAFVSIAGYAPYSP) threads the bilayer. Catalysis depends on Tyr211, which acts as the Proton acceptor. NADP(+)-binding residues include Tyr211, Lys215, and Ile259. Lys215 (lowers pKa of active site Tyr) is an active-site residue.

Belongs to the short-chain dehydrogenases/reductases (SDR) family.

It localises to the endoplasmic reticulum membrane. The catalysed reaction is sphinganine + NADP(+) = 3-oxosphinganine + NADPH + H(+). It participates in lipid metabolism; sphingolipid metabolism. Catalyzes the reduction of 3'-oxosphinganine (3-ketodihydrosphingosine/KDS) to sphinganine (dihydrosphingosine/DHS), the second step of de novo sphingolipid biosynthesis. The chain is 3-ketodihydrosphingosine reductase ksrA from Aspergillus fumigatus (strain ATCC MYA-4609 / CBS 101355 / FGSC A1100 / Af293) (Neosartorya fumigata).